A 754-amino-acid polypeptide reads, in one-letter code: Glutathione biosynthesis bifunctional protein GshAB (754 aa).

The glutamate--cysteine ligase stretch occupies residues 1 to 333 (MHINQLLQHA…KAQKLNDKIA (333 aa)). The ATP-grasp domain maps to 489-752 (KKILRENGYP…LAKLFPEIST (264 aa)). 516–574 (SQIKNKPIVVKPKTTNFGLGISIFETAASHNDYEKALDIAFIEDYSVLVEEFIPGTEYR) is a binding site for ATP. 3 residues coordinate Mg(2+): Asp-696, Glu-717, and Asn-719. 3 residues coordinate Mn(2+): Asp-696, Glu-717, and Asn-719.

The protein in the N-terminal section; belongs to the glutamate--cysteine ligase type 1 family. Type 2 subfamily. In terms of assembly, monomer. Requires Mg(2+) as cofactor. Mn(2+) serves as cofactor.

It catalyses the reaction L-cysteine + L-glutamate + ATP = gamma-L-glutamyl-L-cysteine + ADP + phosphate + H(+). It carries out the reaction gamma-L-glutamyl-L-cysteine + glycine + ATP = glutathione + ADP + phosphate + H(+). It functions in the pathway sulfur metabolism; glutathione biosynthesis; glutathione from L-cysteine and L-glutamate: step 1/2. Its pathway is sulfur metabolism; glutathione biosynthesis; glutathione from L-cysteine and L-glutamate: step 2/2. In terms of biological role, synthesizes glutathione from L-glutamate and L-cysteine via gamma-L-glutamyl-L-cysteine. The polypeptide is Glutathione biosynthesis bifunctional protein GshAB (Streptococcus mutans serotype c (strain ATCC 700610 / UA159)).